The following is a 957-amino-acid chain: Protein translocase subunit SecA (957 aa).

ATP-binding positions include glutamine 87, 105–109, and aspartate 512; that span reads GEGKT. Residues 924 to 957 form a disordered region; sequence AAPAQAPSKSKRSAGRNDPCPCGSGQKYKKCCGK. 4 residues coordinate Zn(2+): cysteine 943, cysteine 945, cysteine 954, and cysteine 955.

It belongs to the SecA family. As to quaternary structure, monomer and homodimer. Part of the essential Sec protein translocation apparatus which comprises SecA, SecYEG and auxiliary proteins SecDF-YajC and YidC. Zn(2+) serves as cofactor.

The protein localises to the cell inner membrane. The protein resides in the cytoplasm. The catalysed reaction is ATP + H2O + cellular proteinSide 1 = ADP + phosphate + cellular proteinSide 2.. In terms of biological role, part of the Sec protein translocase complex. Interacts with the SecYEG preprotein conducting channel. Has a central role in coupling the hydrolysis of ATP to the transfer of proteins into and across the cell membrane, serving as an ATP-driven molecular motor driving the stepwise translocation of polypeptide chains across the membrane. This chain is Protein translocase subunit SecA, found in Geobacter sp. (strain M21).